A 549-amino-acid chain; its full sequence is Probable protein kinase UbiB (549 aa).

The Protein kinase domain occupies 123-501; the sequence is DFDNTPLASA…QQKAHKSNYL (379 aa). Residues 129-137 and K152 contribute to the ATP site; that span reads LASASISQV. D287 serves as the catalytic Proton acceptor. 2 helical membrane passes run 498-518 and 520-540; these read SNYL…LFNQ and ATLW…LLGW.

The protein belongs to the ABC1 family. UbiB subfamily.

The protein localises to the cell inner membrane. Its pathway is cofactor biosynthesis; ubiquinone biosynthesis [regulation]. In terms of biological role, is probably a protein kinase regulator of UbiI activity which is involved in aerobic coenzyme Q (ubiquinone) biosynthesis. The polypeptide is Probable protein kinase UbiB (Shewanella woodyi (strain ATCC 51908 / MS32)).